The primary structure comprises 327 residues: Aldo-keto reductase FVEG_12638 (327 aa).

Aspartate 51 contacts NADP(+). Tyrosine 56 serves as the catalytic Proton donor. A substrate-binding site is contributed by histidine 122. NADP(+) is bound by residues 152 to 153 (SE), 202 to 212 (GPLGHGWLVED), and 286 to 294 (ENFTSRDIE).

Belongs to the aldo/keto reductase family. Aldo/keto reductase 2 subfamily.

In terms of biological role, aldo-keto reductase; part of the Fusarium detoxification of benzoxazolinone cluster 2 (FDB2) involved in the degradation of benzoxazolinones produced by the host plant. Maize, wheat, and rye produce the 2 benzoxazinone phytoanticipins 2,4-dihy-droxy-7-methoxy-1,4-benzoxazin-3-one (DIMBOA) and 2,4-dihydroxy-1,4-benzoxazin-3-one (DIBOA) that, due to their inherent instability once released, spontaneously degrade to the more stable corresponding benzoxazolinones, 6-methoxy-2-benzoxazolinone (MBOA) and 2-benzoxazolinone (BOA), respectively. The first step in the detoxification of benzoxazolinones involves the hydrolysis of the cyclic ester bond of benzoxazolinones by the FDB1 cluster gamma-lactamase MBL1 to aminophenols. MBL1 is able to convert BOA into 2-aminophenol (2-AP), as well as MBOA into 5-methoxy-2-aminophenol (2-AMP). The FDB2 cluster N-malonyltransferase FDB2/NAT1 then metabolizes aminophenols via N-malonylation to non-toxic malonamic acids. FDB2/NAT1 converts 2-AP into N-(2-hydroxyphenyl) malonamic acid (HPMA) and 2-AMP into N-(2-hydroxy-4-methoxyphenyl) malonamic acid (HMPMA). The duplicated dienlactone hydrolases DLH1 and DLH2 may provide redundant function for hydrolyzing the lactone moiety in the BOA molecule. The roles of the amidases an other enzymes encoded by the 2 FDB clusters have not been identified so far. This is Aldo-keto reductase FVEG_12638 from Gibberella moniliformis (strain M3125 / FGSC 7600) (Maize ear and stalk rot fungus).